A 354-amino-acid polypeptide reads, in one-letter code: Uroporphyrinogen decarboxylase (354 aa).

Residues 25-29, D75, Y152, T207, and H330 contribute to the substrate site; that span reads RQAGR.

The protein belongs to the uroporphyrinogen decarboxylase family. As to quaternary structure, homodimer.

It localises to the cytoplasm. It catalyses the reaction uroporphyrinogen III + 4 H(+) = coproporphyrinogen III + 4 CO2. It participates in porphyrin-containing compound metabolism; protoporphyrin-IX biosynthesis; coproporphyrinogen-III from 5-aminolevulinate: step 4/4. Catalyzes the decarboxylation of four acetate groups of uroporphyrinogen-III to yield coproporphyrinogen-III. This chain is Uroporphyrinogen decarboxylase, found in Xanthomonas oryzae pv. oryzae (strain PXO99A).